Consider the following 341-residue polypeptide: Brain-specific homeobox/POU domain protein 3 (341 aa).

Positions 55 to 65 match the POU-IV box motif; sequence RGAEALAAVDI. The region spanning 182–259 is the POU-specific domain; that stretch reads ETETDPRELE…ILEAWLEEAE (78 aa). A DNA-binding region (homeobox) is located at residues 277–336; it reads KKRKRTSIAAPEKRSLEAYFAVQPRPSSEKIAAIAEKLDLKKNVVRVWFCNQRQKQKRMK.

It belongs to the POU transcription factor family. Class-4 subfamily.

It is found in the nucleus. Functionally, may play a role in specifying terminally differentiated neuronal phenotypes. The protein is Brain-specific homeobox/POU domain protein 3 (BRN3) of Gallus gallus (Chicken).